The sequence spans 162 residues: Phosphopantetheine adenylyltransferase (162 aa).

Ser-11 contacts substrate. Residues 11 to 12 (SF) and His-19 each bind ATP. Lys-43, Val-76, and Arg-90 together coordinate substrate. ATP-binding positions include 91–93 (GLR), Glu-101, and 126–132 (LKFVSSS).

It belongs to the bacterial CoaD family. Homohexamer. The cofactor is Mg(2+).

The protein localises to the cytoplasm. It carries out the reaction (R)-4'-phosphopantetheine + ATP + H(+) = 3'-dephospho-CoA + diphosphate. It functions in the pathway cofactor biosynthesis; coenzyme A biosynthesis; CoA from (R)-pantothenate: step 4/5. Reversibly transfers an adenylyl group from ATP to 4'-phosphopantetheine, yielding dephospho-CoA (dPCoA) and pyrophosphate. In Streptococcus suis (strain 05ZYH33), this protein is Phosphopantetheine adenylyltransferase.